Here is a 224-residue protein sequence, read N- to C-terminus: Heme response regulator HssR (224 aa).

The region spanning 3–116 is the Response regulatory domain; it reads NCLIVDDDKK…ELLFRIKAVL (114 aa). 4-aspartylphosphate is present on Asp-52. A DNA-binding region (ompR/PhoB-type) is located at residues 124-222; the sequence is DNELQLGNLI…VRGQGYRVDQ (99 aa).

Post-translationally, phosphorylated by HssS.

The protein resides in the cytoplasm. Its function is as follows. Member of the two-component regulatory system HssS/HssR involved in intracellular heme homeostasis and tempering of staphylococcal virulence. Phosphorylated HssR binds to a direct repeat sequence within hrtAB promoter and activates the expression of hrtAB, an efflux pump, in response to extracellular heme, hemin, hemoglobin or blood. In Staphylococcus epidermidis (strain ATCC 12228 / FDA PCI 1200), this protein is Heme response regulator HssR (hssR).